The sequence spans 104 residues: Large ribosomal subunit protein uL24 (104 aa).

It belongs to the universal ribosomal protein uL24 family. As to quaternary structure, part of the 50S ribosomal subunit.

Functionally, one of two assembly initiator proteins, it binds directly to the 5'-end of the 23S rRNA, where it nucleates assembly of the 50S subunit. One of the proteins that surrounds the polypeptide exit tunnel on the outside of the subunit. The polypeptide is Large ribosomal subunit protein uL24 (Cronobacter sakazakii (strain ATCC BAA-894) (Enterobacter sakazakii)).